The primary structure comprises 915 residues: Protein O-mannosyl-transferase TMTC3 (915 aa).

At 1–8 the chain is on the cytoplasmic side; it reads MANINLKE. The chain crosses the membrane as a helical span at residues 9-29; it reads ITLIVGVVTACYWNSLFCGFV. The Extracellular portion of the chain corresponds to 30-93; that stretch reads FDDVSAILDN…LSELKPMSYH (64 aa). The helical transmembrane segment at 94–114 threads the bilayer; it reads LLNMIFHAVVSVIFLKVCKLF. Topologically, residues 115 to 120 are cytoplasmic; sequence LDNKSS. Transmembrane regions (helical) follow at residues 121–139 and 140–158; these read VIAS…AVTG and VVGR…AFLS. At 159–166 the chain is on the cytoplasmic side; sequence YTRSKGPD. Residues 167 to 187 traverse the membrane as a helical segment; that stretch reads NSIIWTPIALTVFLVAVATLC. Over 188–193 the chain is Extracellular; sequence KEQGIT. The helical transmembrane segment at 194–214 threads the bilayer; that stretch reads VVGICCVYEVFIAQGYTLPLL. The Cytoplasmic segment spans residues 215–231; that stretch reads CTTAGQFLRGKGSIPFS. Residues 232 to 252 form a helical membrane-spanning segment; that stretch reads MLQTLVKLIVLMFSTLLLVVI. Residues 253-317 lie on the Extracellular side of the membrane; it reads RVQVIQSQLP…TIPLIESLLD (65 aa). A helical membrane pass occupies residues 318–338; the sequence is IRNLATFTFFCFLGMLGVFSI. The Cytoplasmic segment spans residues 339-353; that stretch reads RYSGDSSKTVLMALC. The chain crosses the membrane as a helical span at residues 354–374; sequence LMALPFIPASNLFFPVGFVVA. Over 375 to 376 the chain is Extracellular; that stretch reads ER. The chain crosses the membrane as a helical span at residues 377 to 397; it reads VLYVPSMGFCILVAHGWQKIS. The Cytoplasmic portion of the chain corresponds to 398-404; the sequence is TKSVFKK. A helical membrane pass occupies residues 405–423; the sequence is LSWICLSMVILTHSLKTFH. The Extracellular portion of the chain corresponds to 424-915; the sequence is RNWDWESEYT…EEIERILNGE (492 aa). 9 TPR repeats span residues 446-479, 480-513, 529-562, 563-596, 597-631, 669-702, 703-736, 738-771, and 772-805; these read AKLW…QPDD, IGAH…MPQI, NVYI…RPDF, KQAY…DRNN, ADLW…NPKH, ANGY…QADF, RSAL…YPDH, KGLI…DPSN, and VQGK…APHE. Residue Asn494 is glycosylated (N-linked (GlcNAc...) asparagine). At Tyr503 the chain carries Phosphotyrosine. N-linked (GlcNAc...) asparagine glycosylation occurs at Asn541. A disordered region spans residues 848 to 892; sequence KEIRGESRQTQIVKTSDNKSQSKSNKQLGKNGDEETPHKTTKDIK. Asn865 is a glycosylation site (N-linked (GlcNAc...) asparagine). Residues 865–874 show a composition bias toward low complexity; that stretch reads NKSQSKSNKQ. Residues 878–892 show a composition bias toward basic and acidic residues; it reads NGDEETPHKTTKDIK.

The protein belongs to the TMTC family.

The protein resides in the membrane. The protein localises to the endoplasmic reticulum. The enzyme catalyses a di-trans,poly-cis-dolichyl beta-D-mannosyl phosphate + L-seryl-[protein] = 3-O-(alpha-D-mannosyl)-L-seryl-[protein] + a di-trans,poly-cis-dolichyl phosphate + H(+). It catalyses the reaction a di-trans,poly-cis-dolichyl beta-D-mannosyl phosphate + L-threonyl-[protein] = 3-O-(alpha-D-mannosyl)-L-threonyl-[protein] + a di-trans,poly-cis-dolichyl phosphate + H(+). The protein operates within protein modification; protein glycosylation. In terms of biological role, transfers mannosyl residues to the hydroxyl group of serine or threonine residues. The 4 members of the TMTC family are O-mannosyl-transferases dedicated primarily to the cadherin superfamily, each member seems to have a distinct role in decorating the cadherin domains with O-linked mannose glycans at specific regions. Also acts as O-mannosyl-transferase on other proteins such as PDIA3. Involved in the positive regulation of proteasomal protein degradation in the endoplasmic reticulum (ER), and the control of ER stress response. The sequence is that of Protein O-mannosyl-transferase TMTC3 from Homo sapiens (Human).